Reading from the N-terminus, the 292-residue chain is BTB/POZ domain-containing protein KCTD7 (292 aa).

The interval 1–27 (MVVFSAASDSEKPGDAMSGADKGEEEY) is disordered. The region spanning 56–144 (IPLNVGGTYF…YAIGPLLENL (89 aa)) is the BTB domain.

Its subcellular location is the cell membrane. It localises to the cytoplasm. It is found in the cytosol. This Danio rerio (Zebrafish) protein is BTB/POZ domain-containing protein KCTD7 (kctd7).